A 251-amino-acid chain; its full sequence is MATAVGSGSDVEVGFAKLQGEDFEYYMQSYSIILGRNSKKSTVDVDLSSLGGGMNISRNHARIFYDFTRRRFSLEVLGKNGCFVEGVLHLPGNPNVKLDSQDLLQIGDKEFYFLLPVWSILGGPLGPRHHVLGKATVVPYHNYHSGPGSGSGKNGVRSRELYEYDDEDDDEEEDIRGSGKKTWRDGHEGVYASGEKKREGRSKADREADDQQFLQLMHGSGWSVTDIKGVWKRMASQSSKKIPITRRLGYP.

The FHA domain maps to 32–89 (IILGRNSKKSTVDVDLSSLGGGMNISRNHARIFYDFTRRRFSLEVLGKNGCFVEGVLH). Positions 163 to 174 (EYDDEDDDEEED) are enriched in acidic residues. A disordered region spans residues 163–209 (EYDDEDDDEEEDIRGSGKKTWRDGHEGVYASGEKKREGRSKADREAD). Positions 182 to 206 (TWRDGHEGVYASGEKKREGRSKADR) are enriched in basic and acidic residues.

As to expression, expressed in roots and vascular tissues near the shoot apex in young seedlings.

It localises to the nucleus. Its function is as follows. May play a role in the control of plant organ development. Does not show transactivation activity in yeast. The chain is FHA domain-containing protein FHA1 from Arabidopsis thaliana (Mouse-ear cress).